The primary structure comprises 132 residues: Large ribosomal subunit protein uL14 (132 aa).

Belongs to the universal ribosomal protein uL14 family. Part of the 50S ribosomal subunit. Forms a cluster with proteins L3 and L24e, part of which may contact the 16S rRNA in 2 intersubunit bridges.

Its function is as follows. Binds to 23S rRNA. Forms part of two intersubunit bridges in the 70S ribosome. The chain is Large ribosomal subunit protein uL14 from Methanosphaera stadtmanae (strain ATCC 43021 / DSM 3091 / JCM 11832 / MCB-3).